Consider the following 207-residue polypeptide: High frequency lysogenization protein HflD homolog (207 aa).

It belongs to the HflD family.

It is found in the cytoplasm. It localises to the cell inner membrane. The polypeptide is High frequency lysogenization protein HflD homolog (Pseudomonas fluorescens (strain SBW25)).